We begin with the raw amino-acid sequence, 944 residues long: MQVNFDETCDSVIRMNANEQTRSANGIGNGNGESIPGIPDDLRCKRSDGKQWRCTAMSMADKTVCEKHYIQAKKRAANSAFRANQKKAKRRSSLGETDTYSEGKMDDFELPVTSIDHYNNGLASASKSNGRLEKRHNKSLMRYSPETPMMRSFSPRVAVDLNDDLGRDVVMFEEGYRSYRTPPSVAVMDPTRNRSHQSTSPMEYSAASTDVSAESLGEICHQCQRKDRERIISCLKCNQRAFCHNCLSARYSEISLEEVEKVCPACRGLCDCKSCLRSDNTIKVRIREIPVLDKLQYLYRLLSAVLPVIKQIHLEQCMEVELEKRLREVEIDLVRARLKADEQMCCNVCRIPVVDYYRHCPNCSYDLCLRCCQDLREESSVTISGTNQNVQDRKGAPKLKLNFSYKFPEWEANGDGSIPCPPKEYGGCGSHSLNLARIFKMNWVAKLVKNAEEIVSGCKLSDLLNPDMCDSRFCKFAEREESGDNYVYSPSLETIKTDGVAKFEQQWAEGRLVTVKMVLDDSSCSRWDPETIWRDIDELSDEKLREHDPFLKAINCLDGLEVDVRLGEFTRAYKDGKNQETGLPLLWKLKDWPSPSASEEFIFYQRPEFIRSFPFLEYIHPRLGLLNVAAKLPHYSLQNDSGPKIYVSCGTYQEISAGDSLTGIHYNMRDMVYLLVHTSEETTFERVRKTKPVPEEPDQKMSENESLLSPEQKLRDGELHDLSLGEASMEKNEPELALTVNPENLTENGDNMESSCTSSCAGGAQWDVFRRQDVPKLSGYLQRTFQKPDNIQTDFVSRPLYEGLFLNEHHKRQLRDEFGVEPWTFEQHRGEAIFIPAGCPFQITNLQSNIQVALDFLCPESVGESARLAEEIRCLPNDHEAKLQILEIGKISLYAASSAIKEVQKLVLDPKFGAELGFEDSNLTKAVSHNLDEATKRPQQNSCT.

Disordered stretches follow at residues 20–40 (QTRSANGIGNGNGESIPGIPD) and 77–103 (ANSAFRANQKKAKRRSSLGETDTYSEG). Positions 38–83 (IPDDLRCKRSDGKQWRCTAMSMADKTVCEKHYIQAKKRAANSAFRA) constitute a WRC domain. Residues 73–80 (KKRAANSA) carry the Nuclear localization signal 1 motif. A PHD-type; atypical zinc finger spans residues 217–269 (GEICHQCQRKDRERIISCLKCNQRAFCHNCLSARYSEISLEEVEKVCPACRGL). Zn(2+)-binding residues include cysteine 220, cysteine 223, cysteine 234, cysteine 237, cysteine 243, cysteine 246, cysteine 263, and cysteine 266. The Nuclear localization signal 2 signature appears at 323–330 (EKRLREVE). The 253-residue stretch at 621 to 873 (PRLGLLNVAA…ESARLAEEIR (253 aa)) folds into the JmjC domain. The segment covering 685–703 (ERVRKTKPVPEEPDQKMSE) has biased composition (basic and acidic residues). The tract at residues 685 to 715 (ERVRKTKPVPEEPDQKMSENESLLSPEQKLR) is disordered.

It belongs to the JARID1 histone demethylase family. Homodimer. Interacts with RDR2. Binds to CMT3. Associates with the E2 ubiquitin-conjugating enzyme UBC10. In terms of processing, self-ubiquitinates. As to expression, expressed in inflorescences, flowers, roots, siliques, leaves and stems, especially in the vasculature (mainly phloem), with highest levels in floral organs.

It is found in the nucleus. It carries out the reaction S-ubiquitinyl-[E2 ubiquitin-conjugating enzyme]-L-cysteine + [acceptor protein]-L-lysine = [E2 ubiquitin-conjugating enzyme]-L-cysteine + N(6)-ubiquitinyl-[acceptor protein]-L-lysine.. Its function is as follows. Binds histone H3 but seems to have lost demethylase activity probably due to its inability to bind iron Fe(2+). Possesses E3 ubiquitin ligase activity and targets directly CMT3 for proteasomal degradation to initiate destabilization of the heterochromatic state (e.g. CHG cytosine methylation and H3K9me2) of endogenous silenced loci. Required for the removal of repressive H3K9me2 histone marks to facilitate the transcription of AtSN1, AtMu1c, solo LTR and SDC, thus counteracting their transcriptional silencing. Mainly required to promote the basal level transcription of silenced loci such as TE and repeats targeted by RNA-dependent DNA methylation (RdDM) for silencing, a specialized branch of the RNA interference (RNAi) pathway. Also cooperates with RNAi pathways for gene silencing both by contributing to the production of 24-nt siRNA to initiate RdDM and by recruiting RDR2 to enable local transcripts to make dsRNA. Antagonizes histone H3K9 demethylase IBM1/JMJ25 function. The chain is E3 ubiquitin-protein ligase JMJ24 from Arabidopsis thaliana (Mouse-ear cress).